A 115-amino-acid polypeptide reads, in one-letter code: Aspartate 1-decarboxylase (115 aa).

Residue Ser-24 is the Schiff-base intermediate with substrate; via pyruvic acid of the active site. Ser-24 is subject to Pyruvic acid (Ser). Thr-56 is a substrate binding site. Tyr-57 functions as the Proton donor in the catalytic mechanism. Residue 72–74 (GAA) coordinates substrate.

It belongs to the PanD family. As to quaternary structure, heterooctamer of four alpha and four beta subunits. Pyruvate is required as a cofactor. In terms of processing, is synthesized initially as an inactive proenzyme, which is activated by self-cleavage at a specific serine bond to produce a beta-subunit with a hydroxyl group at its C-terminus and an alpha-subunit with a pyruvoyl group at its N-terminus.

The protein resides in the cytoplasm. The enzyme catalyses L-aspartate + H(+) = beta-alanine + CO2. It functions in the pathway cofactor biosynthesis; (R)-pantothenate biosynthesis; beta-alanine from L-aspartate: step 1/1. Functionally, catalyzes the pyruvoyl-dependent decarboxylation of aspartate to produce beta-alanine. This is Aspartate 1-decarboxylase from Pseudothermotoga lettingae (strain ATCC BAA-301 / DSM 14385 / NBRC 107922 / TMO) (Thermotoga lettingae).